A 528-amino-acid chain; its full sequence is Ribonuclease Y (528 aa).

The chain crosses the membrane as a helical span at residues 15 to 35; it reads SLFFLALICGSIIGYFLYSFF. In terms of domain architecture, KH spans 217–277; sequence NISVVNIPNE…IRREIAKKTL (61 aa). Residues 343-436 enclose the HD domain; the sequence is VLKHSLEVAF…VAIADTLSSA (94 aa).

Belongs to the RNase Y family.

The protein resides in the cell membrane. Functionally, endoribonuclease that initiates mRNA decay. This Aster yellows witches'-broom phytoplasma (strain AYWB) protein is Ribonuclease Y.